Consider the following 701-residue polypeptide: Protein UL29/UL28 (701 aa).

The disordered stretch occupies residues Met1 to Arg33.

The protein belongs to the herpesviridae US22 family. In terms of assembly, interacts with UL38 and host HDAC1; these interactions are necessary for the HDAC1 interaction with UL38. Interacts with host MTA2.

Its subcellular location is the virion. The protein resides in the host nucleus. The protein localises to the host cytoplasm. Contributes to activation of immediate-early gene expression. In Homo sapiens (Human), this protein is Protein UL29/UL28 (UL29).